The primary structure comprises 132 residues: MVEKNTYFIGVGRRKTAVATVKLMSGNGVIVIDGKPIEERFTRIQERNVILNPMMVTDTMGKFNAVIKVLGGGVTGQSGAIAHGIARALEKTDEKLRATLKSNGLLTRDDRTKERKKPGLKRARKAPQYTKR.

Positions 100–132 are disordered; that stretch reads LKSNGLLTRDDRTKERKKPGLKRARKAPQYTKR. A compositionally biased stretch (basic residues) spans 114–132; the sequence is ERKKPGLKRARKAPQYTKR.

The protein belongs to the universal ribosomal protein uS9 family.

The sequence is that of Small ribosomal subunit protein uS9 from Dehalococcoides mccartyi (strain ATCC BAA-2100 / JCM 16839 / KCTC 5957 / BAV1).